We begin with the raw amino-acid sequence, 186 residues long: Ribosome-recycling factor (186 aa).

The segment at 135 to 162 is disordered; the sequence is DGMDGLKKAEKDGDIGQDESRAQSERVQ.

It belongs to the RRF family.

It localises to the cytoplasm. Responsible for the release of ribosomes from messenger RNA at the termination of protein biosynthesis. May increase the efficiency of translation by recycling ribosomes from one round of translation to another. This Sinorhizobium fredii (strain NBRC 101917 / NGR234) protein is Ribosome-recycling factor.